Reading from the N-terminus, the 240-residue chain is Phosphoribosylaminoimidazole-succinocarboxamide synthase (240 aa).

The protein belongs to the SAICAR synthetase family.

The enzyme catalyses 5-amino-1-(5-phospho-D-ribosyl)imidazole-4-carboxylate + L-aspartate + ATP = (2S)-2-[5-amino-1-(5-phospho-beta-D-ribosyl)imidazole-4-carboxamido]succinate + ADP + phosphate + 2 H(+). Its pathway is purine metabolism; IMP biosynthesis via de novo pathway; 5-amino-1-(5-phospho-D-ribosyl)imidazole-4-carboxamide from 5-amino-1-(5-phospho-D-ribosyl)imidazole-4-carboxylate: step 1/2. The protein is Phosphoribosylaminoimidazole-succinocarboxamide synthase of Limosilactobacillus fermentum (strain NBRC 3956 / LMG 18251) (Lactobacillus fermentum).